The following is a 430-amino-acid chain: Isochorismate synthase MenF (430 aa).

The active-site Proton acceptor is the lysine 187. Residue glutamate 237 is the Proton donor of the active site. Mg(2+)-binding residues include glutamate 281 and glutamate 414.

This sequence belongs to the isochorismate synthase family. The cofactor is Mg(2+).

It carries out the reaction chorismate = isochorismate. It participates in quinol/quinone metabolism; 1,4-dihydroxy-2-naphthoate biosynthesis; 1,4-dihydroxy-2-naphthoate from chorismate: step 1/7. The protein operates within quinol/quinone metabolism; menaquinone biosynthesis. Functionally, catalyzes the conversion of chorismate to isochorismate. This Haemophilus influenzae (strain ATCC 51907 / DSM 11121 / KW20 / Rd) protein is Isochorismate synthase MenF.